A 302-amino-acid polypeptide reads, in one-letter code: uncharacterized protein (302 aa).

A disordered region spans residues 1–24; it reads MTEISELASSSQKPEKTKYNLPKP.

This is an uncharacterized protein from Schizosaccharomyces pombe (strain 972 / ATCC 24843) (Fission yeast).